A 317-amino-acid chain; its full sequence is Malate dehydrogenase (317 aa).

NAD(+)-binding positions include 13 to 18 (GAGNIG) and Asp38. 2 residues coordinate substrate: Arg87 and Arg93. NAD(+) contacts are provided by residues Asn100 and 123 to 125 (VTN). Residues Asn125 and Arg156 each coordinate substrate. The Proton acceptor role is filled by His180.

It belongs to the LDH/MDH superfamily. MDH type 3 family.

The enzyme catalyses (S)-malate + NAD(+) = oxaloacetate + NADH + H(+). Functionally, catalyzes the reversible oxidation of malate to oxaloacetate. The sequence is that of Malate dehydrogenase from Anaplasma marginale (strain Florida).